The following is a 321-amino-acid chain: Cytochrome f (321 aa).

The N-terminal stretch at 1–38 (MKKNFYTISKTMSRSLKLILFSVFIGFSIFLIPQPTWA) is a signal peptide. 4 residues coordinate heme: tyrosine 39, cysteine 59, cysteine 62, and histidine 63. The chain crosses the membrane as a helical span at residues 288 to 308 (VIGMIIFFIGVGLSQIMLVLK).

Belongs to the cytochrome f family. The 4 large subunits of the cytochrome b6-f complex are cytochrome b6, subunit IV (17 kDa polypeptide, PetD), cytochrome f and the Rieske protein, while the 4 small subunits are PetG, PetL, PetM and PetN. The complex functions as a dimer. It depends on heme as a cofactor.

It is found in the cellular thylakoid membrane. Component of the cytochrome b6-f complex, which mediates electron transfer between photosystem II (PSII) and photosystem I (PSI), cyclic electron flow around PSI, and state transitions. This is Cytochrome f from Prochlorococcus marinus (strain NATL1A).